A 144-amino-acid chain; its full sequence is Large ribosomal subunit protein uL15 (144 aa).

A disordered region spans residues 1–48 (MIKLECLQDPSPRKRRTKLLGRGPSSGHGKTSGRGHKGDGSRSGYKRR).

It belongs to the universal ribosomal protein uL15 family. As to quaternary structure, part of the 50S ribosomal subunit.

Functionally, binds to the 23S rRNA. This Chlamydia trachomatis serovar L2 (strain ATCC VR-902B / DSM 19102 / 434/Bu) protein is Large ribosomal subunit protein uL15.